The sequence spans 390 residues: Endoglucanase gh5-1 (390 aa).

Positions methionine 1 to alanine 16 are cleaved as a signal peptide. The 36-residue stretch at glutamine 17–glutamine 52 folds into the CBM1 domain. 2 N-linked (GlcNAc...) asparagine glycosylation sites follow: asparagine 157 and asparagine 261.

It belongs to the glycosyl hydrolase 5 (cellulase A) family. Post-translationally, N-glycosylated.

It is found in the secreted. The enzyme catalyses Endohydrolysis of (1-&gt;4)-beta-D-glucosidic linkages in cellulose, lichenin and cereal beta-D-glucans.. Its function is as follows. Endoglucanase that plays an important role in biomass degradation. Binds onto plant cell walls to participate in the hydrolysis of cellulose. This chain is Endoglucanase gh5-1, found in Neurospora crassa (strain ATCC 24698 / 74-OR23-1A / CBS 708.71 / DSM 1257 / FGSC 987).